A 367-amino-acid polypeptide reads, in one-letter code: 3-dehydroquinate synthase (367 aa).

Residues 111–115 (GVVGD), 135–136 (TS), K148, K157, and 175–178 (TLDT) each bind NAD(+). Positions 190, 254, and 271 each coordinate Zn(2+).

This sequence belongs to the sugar phosphate cyclases superfamily. Dehydroquinate synthase family. It depends on Co(2+) as a cofactor. Requires Zn(2+) as cofactor. NAD(+) serves as cofactor.

It localises to the cytoplasm. It carries out the reaction 7-phospho-2-dehydro-3-deoxy-D-arabino-heptonate = 3-dehydroquinate + phosphate. It functions in the pathway metabolic intermediate biosynthesis; chorismate biosynthesis; chorismate from D-erythrose 4-phosphate and phosphoenolpyruvate: step 2/7. Functionally, catalyzes the conversion of 3-deoxy-D-arabino-heptulosonate 7-phosphate (DAHP) to dehydroquinate (DHQ). The protein is 3-dehydroquinate synthase of Salinibacter ruber (strain DSM 13855 / M31).